The sequence spans 307 residues: Thymidylate synthase (307 aa).

Residues Arg26 and 160 to 161 (RR) contribute to the dUMP site. The active-site Nucleophile is Cys180. DUMP is bound by residues 209–212 (RSCD), Asn220, and 250–252 (HIY). Asp212 is a binding site for (6R)-5,10-methylene-5,6,7,8-tetrahydrofolate. Position 306 (Ala306) interacts with (6R)-5,10-methylene-5,6,7,8-tetrahydrofolate.

This sequence belongs to the thymidylate synthase family. Bacterial-type ThyA subfamily. In terms of assembly, homodimer.

The protein resides in the cytoplasm. The enzyme catalyses dUMP + (6R)-5,10-methylene-5,6,7,8-tetrahydrofolate = 7,8-dihydrofolate + dTMP. The protein operates within pyrimidine metabolism; dTTP biosynthesis. Functionally, catalyzes the reductive methylation of 2'-deoxyuridine-5'-monophosphate (dUMP) to 2'-deoxythymidine-5'-monophosphate (dTMP) while utilizing 5,10-methylenetetrahydrofolate (mTHF) as the methyl donor and reductant in the reaction, yielding dihydrofolate (DHF) as a by-product. This enzymatic reaction provides an intracellular de novo source of dTMP, an essential precursor for DNA biosynthesis. This Rhizobium rhizogenes (strain K84 / ATCC BAA-868) (Agrobacterium radiobacter) protein is Thymidylate synthase.